The primary structure comprises 454 residues: UPF0210 protein Cphy_2797 (454 aa).

Belongs to the UPF0210 family. As to quaternary structure, homodimer.

In Lachnoclostridium phytofermentans (strain ATCC 700394 / DSM 18823 / ISDg) (Clostridium phytofermentans), this protein is UPF0210 protein Cphy_2797.